The chain runs to 136 residues: MKFTSVIALVATAATLVGAVPFETNAERLARGLPPLPPARRASGVEAAKPKPSPSHGCSTGPVQCCNDLVDRSNHTVGILIGLLGIVLGPVTGLFGLGCSPLLGGGAKCQSQTVCCSDNKFSGIINIGCSPINIGL.

Residues 1 to 19 (MKFTSVIALVATAATLVGA) form the signal peptide. 4 disulfides stabilise this stretch: Cys58–Cys115, Cys65–Cys109, Cys66–Cys99, and Cys116–Cys129. Asn74 carries an N-linked (GlcNAc...) asparagine glycan.

The protein belongs to the fungal hydrophobin family. Self-assembles to form functional amyloid fibrils called rodlets. Self-assembly into fibrillar rodlets occurs spontaneously at hydrophobic:hydrophilic interfaces and the rodlets further associate laterally to form amphipathic monolayers.

It localises to the secreted. Its subcellular location is the cell wall. Aerial growth, conidiation, and dispersal of filamentous fungi in the environment rely upon a capability of their secreting small amphipathic proteins called hydrophobins (HPBs) with low sequence identity. Class I can self-assemble into an outermost layer of rodlet bundles on aerial cell surfaces, conferring cellular hydrophobicity that supports fungal growth, development and dispersal; whereas Class II form highly ordered films at water-air interfaces through intermolecular interactions but contribute nothing to the rodlet structure. Hydph16 is a class I hydrophobin that has specific functions in aerial mycelium formation, cell wall stress protection, and cell wall structure formation, but does not seem to be involved in mycelial hydrophobicity. Specifically functions in resisting cell wall synthesis inhibitors. This Pleurotus ostreatus (strain PC15) (Oyster mushroom) protein is Class I hydrophobin 16.